A 176-amino-acid chain; its full sequence is ATP-dependent protease subunit HslV (176 aa).

T2 is a catalytic residue. Na(+) is bound by residues G158, C161, and T164.

Belongs to the peptidase T1B family. HslV subfamily. In terms of assembly, a double ring-shaped homohexamer of HslV is capped on each side by a ring-shaped HslU homohexamer. The assembly of the HslU/HslV complex is dependent on binding of ATP.

It is found in the cytoplasm. It catalyses the reaction ATP-dependent cleavage of peptide bonds with broad specificity.. Allosterically activated by HslU binding. Protease subunit of a proteasome-like degradation complex believed to be a general protein degrading machinery. The protein is ATP-dependent protease subunit HslV of Pasteurella multocida (strain Pm70).